A 1154-amino-acid chain; its full sequence is DNA-directed RNA polymerase subunit beta' (1154 aa).

Zn(2+)-binding residues include Cys-60, Cys-62, Cys-75, and Cys-78. The Mg(2+) site is built by Asp-449, Asp-451, and Asp-453. Residues Cys-774, Cys-848, Cys-855, and Cys-858 each contribute to the Zn(2+) site.

Belongs to the RNA polymerase beta' chain family. As to quaternary structure, the RNAP catalytic core consists of 2 alpha, 1 beta, 1 beta' and 1 omega subunit. When a sigma factor is associated with the core the holoenzyme is formed, which can initiate transcription. Mg(2+) serves as cofactor. Requires Zn(2+) as cofactor.

The catalysed reaction is RNA(n) + a ribonucleoside 5'-triphosphate = RNA(n+1) + diphosphate. DNA-dependent RNA polymerase catalyzes the transcription of DNA into RNA using the four ribonucleoside triphosphates as substrates. The protein is DNA-directed RNA polymerase subunit beta' of Desulforudis audaxviator (strain MP104C).